Consider the following 555-residue polypeptide: CTP synthase (555 aa).

Residues 1–267 (MPKFVFVTGG…CKEVLEFLDL (267 aa)) form an amidoligase domain region. Ser-13 is a binding site for CTP. Ser-13 lines the UTP pocket. Residues 14 to 19 (SIGKGI) and Asp-71 each bind ATP. Mg(2+) is bound by residues Asp-71 and Glu-141. CTP is bound by residues 148–150 (DIE), 188–193 (KTKPTQ), and Lys-224. UTP-binding positions include 188–193 (KTKPTQ) and Lys-224. Positions 292–534 (KVAVVGKYVQ…IAAAQSRLPR (243 aa)) constitute a Glutamine amidotransferase type-1 domain. Gly-354 contacts L-glutamine. Catalysis depends on Cys-381, which acts as the Nucleophile; for glutamine hydrolysis. Residues 382-385 (LGMQ), Glu-405, and Arg-462 contribute to the L-glutamine site. Catalysis depends on residues His-507 and Glu-509. The interval 532–555 (LPRSPQEALKQTQINSPNQSKNNP) is disordered. Over residues 540-555 (LKQTQINSPNQSKNNP) the composition is skewed to polar residues.

This sequence belongs to the CTP synthase family. As to quaternary structure, homotetramer.

The enzyme catalyses UTP + L-glutamine + ATP + H2O = CTP + L-glutamate + ADP + phosphate + 2 H(+). It catalyses the reaction L-glutamine + H2O = L-glutamate + NH4(+). The catalysed reaction is UTP + NH4(+) + ATP = CTP + ADP + phosphate + 2 H(+). Its pathway is pyrimidine metabolism; CTP biosynthesis via de novo pathway; CTP from UDP: step 2/2. With respect to regulation, allosterically activated by GTP, when glutamine is the substrate; GTP has no effect on the reaction when ammonia is the substrate. The allosteric effector GTP functions by stabilizing the protein conformation that binds the tetrahedral intermediate(s) formed during glutamine hydrolysis. Inhibited by the product CTP, via allosteric rather than competitive inhibition. In terms of biological role, catalyzes the ATP-dependent amination of UTP to CTP with either L-glutamine or ammonia as the source of nitrogen. Regulates intracellular CTP levels through interactions with the four ribonucleotide triphosphates. The protein is CTP synthase of Prochlorococcus marinus (strain MIT 9211).